The sequence spans 166 residues: Regulator of ribonuclease activity A (166 aa).

Belongs to the RraA family. As to quaternary structure, homotrimer. Binds to both RNA-binding sites in the C-terminal region of Rne and to RhlB.

It localises to the cytoplasm. Globally modulates RNA abundance by binding to RNase E (Rne) and regulating its endonucleolytic activity. Can modulate Rne action in a substrate-dependent manner by altering the composition of the degradosome. Modulates RNA-binding and helicase activities of the degradosome. The polypeptide is Regulator of ribonuclease activity A (Mannheimia succiniciproducens (strain KCTC 0769BP / MBEL55E)).